The primary structure comprises 590 residues: Enhancer of polycomb-like protein 1 (590 aa).

2 disordered regions span residues 302–335 (DEDLVNQKPQKRKPVEPPVVRQPTGAHLRQPVRS) and 471–497 (TPPRELGEDRSDRWKYDSDSDDEEPPV). Residues 475–488 (ELGEDRSDRWKYDS) show a composition bias toward basic and acidic residues.

It belongs to the enhancer of polycomb family. In terms of assembly, component of the NuA4 histone acetyltransferase complex.

Its subcellular location is the nucleus. Its function is as follows. Component of the NuA4 histone acetyltransferase complex which is involved in transcriptional activation of selected genes principally by acetylation of nucleosomal histone H4 and H2A. The NuA4 complex is also involved in DNA repair. Involved in gene silencing by neighboring heterochromatin, blockage of the silencing spreading along the chromosome, and required for cell cycle progression through G2/M. The polypeptide is Enhancer of polycomb-like protein 1 (EPL1) (Gibberella zeae (strain ATCC MYA-4620 / CBS 123657 / FGSC 9075 / NRRL 31084 / PH-1) (Wheat head blight fungus)).